Here is a 242-residue protein sequence, read N- to C-terminus: 1-(5-phosphoribosyl)-5-[(5-phosphoribosylamino)methylideneamino] imidazole-4-carboxamide isomerase (242 aa).

D8 functions as the Proton acceptor in the catalytic mechanism. The active-site Proton donor is D129.

This sequence belongs to the HisA/HisF family.

Its subcellular location is the cytoplasm. The catalysed reaction is 1-(5-phospho-beta-D-ribosyl)-5-[(5-phospho-beta-D-ribosylamino)methylideneamino]imidazole-4-carboxamide = 5-[(5-phospho-1-deoxy-D-ribulos-1-ylimino)methylamino]-1-(5-phospho-beta-D-ribosyl)imidazole-4-carboxamide. The protein operates within amino-acid biosynthesis; L-histidine biosynthesis; L-histidine from 5-phospho-alpha-D-ribose 1-diphosphate: step 4/9. The chain is 1-(5-phosphoribosyl)-5-[(5-phosphoribosylamino)methylideneamino] imidazole-4-carboxamide isomerase from Syntrophus aciditrophicus (strain SB).